A 262-amino-acid polypeptide reads, in one-letter code: 14-3-3 protein I (262 aa).

The protein belongs to the 14-3-3 family. In terms of assembly, homodimer. Forms a complex composed of CDPK1, PKA regulatory subunit PKAr and 14-3-3I; the complex is formed in merozoites in response to low extracellular level of K(+) and may play a role in microneme secretion. Interacts with CDPK1 (when phosphorylated) in a Ca(2+)-independent manner; the interaction does not regulate CDPK1 catalytic activity but is required for merozoite invasion of host erythrocytes. Interacts with PKA regulatory subunit PKAr (when phosphorylated) in a Ca(2+)-dependent manner. Interacts with histone H3 (when phosphorylated at 'Ser-28' or when phosphorylated at 'Ser-28' and 'Ser-32').

Its subcellular location is the cell membrane. It localises to the cytoplasm. It is found in the nucleus. Its function is as follows. Adapter protein which binds to its partners, usually via a phosphoserine or phosphothreonine motif. Binding generally results in the modulation of the activity and/or cellular localization of the binding partner. Via its interaction with CDPK1 and PKAr, involved in merozoite microneme secretion and thus in merozoite invasion of host erythrocytes. This chain is 14-3-3 protein I, found in Plasmodium falciparum (isolate 3D7).